The primary structure comprises 429 residues: Mannose-6-phosphate isomerase (429 aa).

Zn(2+)-binding residues include Q109, H111, E136, and H281. The active site involves R300.

It belongs to the mannose-6-phosphate isomerase type 1 family. Zn(2+) is required as a cofactor.

Its subcellular location is the cytoplasm. The catalysed reaction is D-mannose 6-phosphate = D-fructose 6-phosphate. It functions in the pathway nucleotide-sugar biosynthesis; GDP-alpha-D-mannose biosynthesis; alpha-D-mannose 1-phosphate from D-fructose 6-phosphate: step 1/2. Functionally, involved in the synthesis of the GDP-mannose and dolichol-phosphate-mannose required for a number of critical mannosyl transfer reactions. The protein is Mannose-6-phosphate isomerase (PMI1) of Eremothecium gossypii (strain ATCC 10895 / CBS 109.51 / FGSC 9923 / NRRL Y-1056) (Yeast).